The following is a 456-amino-acid chain: Dihydroorotase (456 aa).

Histidine 60 and histidine 62 together coordinate Zn(2+). Substrate is bound by residues 62 to 64 (HFR) and asparagine 94. Zn(2+)-binding residues include glutamate 146, histidine 180, histidine 234, and aspartate 313. Aspartate 313 is an active-site residue. Residue histidine 317 participates in substrate binding.

Belongs to the metallo-dependent hydrolases superfamily. DHOase family. Class I DHOase subfamily. It depends on Zn(2+) as a cofactor.

It catalyses the reaction (S)-dihydroorotate + H2O = N-carbamoyl-L-aspartate + H(+). Its pathway is pyrimidine metabolism; UMP biosynthesis via de novo pathway; (S)-dihydroorotate from bicarbonate: step 3/3. Its function is as follows. Catalyzes the reversible cyclization of carbamoyl aspartate to dihydroorotate. The chain is Dihydroorotase from Methanosarcina mazei (strain ATCC BAA-159 / DSM 3647 / Goe1 / Go1 / JCM 11833 / OCM 88) (Methanosarcina frisia).